A 450-amino-acid polypeptide reads, in one-letter code: Transcription factor AP-2 gamma (450 aa).

A Glycyl lysine isopeptide (Lys-Gly) (interchain with G-Cter in SUMO) cross-link involves residue Lys-10. Disordered stretches follow at residues 13–63 and 90–126; these read EDCE…FPPP and LHQPAPTGSQQQAWPGRQSQEGAGLPSHHGRPAGLLP. The short motif at 59-64 is the PPxY motif element; the sequence is YFPPPY. A compositionally biased stretch (polar residues) spans 95-110; the sequence is PTGSQQQAWPGRQSQE. Ser-252 is subject to Phosphoserine; by PKA. Residues 293 to 424 are H-S-H (helix-span-helix), dimerization; that stretch reads RRKAAHVTLL…YIKEALIVID (132 aa). Residues 431–450 form a disordered region; that stretch reads GDQSPADSNKTLEKMEKHRK. Residue Ser-434 is modified to Phosphoserine. Basic and acidic residues predominate over residues 440–450; sequence KTLEKMEKHRK.

This sequence belongs to the AP-2 family. In terms of assembly, binds DNA as a dimer. Can form homodimers or heterodimers with other AP-2 family members. Interacts with WWOX. Interacts with UBE2I. Interacts with KCTD1; this interaction represses transcription activation. Interacts with CITED2 (via C-terminus); the interaction stimulates TFAP2B-transcriptional activity. Interacts with CITED4. Interacts with MTA1. In terms of processing, sumoylated on Lys-10; which inhibits transcriptional activity.

Its subcellular location is the nucleus. Functionally, sequence-specific DNA-binding transcription factor that interacts with cellular enhancer elements to regulate transcription of selected genes, and which plays a key role in early embryonic development. AP-2 factors bind to the consensus sequence 5'-GCCNNNGGC-3' and activate genes involved in a large spectrum of important biological functions. TFAP2C plays a key role in early embryonic development by regulating both inner cell mass (ICM) and trophectoderm differentiation. At the 8-cell stage, during morula development, controls expression of cell-polarity genes. Upon trophoblast commitment, binds to late trophectoderm genes in blastocysts together with CDX2, and later to extra-embryonic ectoderm genes together with SOX2. Binds to both closed and open chromatin with other transcription factors. Involved in the MTA1-mediated epigenetic regulation of ESR1 expression in breast cancer. This Homo sapiens (Human) protein is Transcription factor AP-2 gamma (TFAP2C).